The sequence spans 152 residues: SsrA-binding protein (152 aa).

Belongs to the SmpB family.

It localises to the cytoplasm. Functionally, required for rescue of stalled ribosomes mediated by trans-translation. Binds to transfer-messenger RNA (tmRNA), required for stable association of tmRNA with ribosomes. tmRNA and SmpB together mimic tRNA shape, replacing the anticodon stem-loop with SmpB. tmRNA is encoded by the ssrA gene; the 2 termini fold to resemble tRNA(Ala) and it encodes a 'tag peptide', a short internal open reading frame. During trans-translation Ala-aminoacylated tmRNA acts like a tRNA, entering the A-site of stalled ribosomes, displacing the stalled mRNA. The ribosome then switches to translate the ORF on the tmRNA; the nascent peptide is terminated with the 'tag peptide' encoded by the tmRNA and targeted for degradation. The ribosome is freed to recommence translation, which seems to be the essential function of trans-translation. This chain is SsrA-binding protein, found in Rickettsia bellii (strain RML369-C).